The following is a 295-amino-acid chain: Nucleotide-binding protein BH3569 (295 aa).

Residue 14–21 (GMSGAGKT) participates in ATP binding. Residue 65–68 (DLRG) participates in GTP binding.

Belongs to the RapZ-like family.

Displays ATPase and GTPase activities. The protein is Nucleotide-binding protein BH3569 of Halalkalibacterium halodurans (strain ATCC BAA-125 / DSM 18197 / FERM 7344 / JCM 9153 / C-125) (Bacillus halodurans).